The sequence spans 813 residues: Fibroblast growth factor receptor 2 (813 aa).

Residues 1-14 (MLLLALLAFLLVSR) form the signal peptide. The Extracellular segment spans residues 18–367 (RPSYSMVDDT…EDNPVPYYME (350 aa)). The region spanning 21 to 117 (YSMVDDTTPE…NSHFFHVNVT (97 aa)) is the Ig-like C2-type 1 domain. C58 and C103 are joined by a disulfide. 2 N-linked (GlcNAc...) asparagine glycosylation sites follow: N79 and N115. The tract at residues 119 to 143 (ASSSGDDEDDNDGSEDFTNDNNNIR) is disordered. Acidic residues predominate over residues 123 to 136 (GDDEDDNDGSEDFT). Ig-like C2-type domains lie at 145–237 (PYWT…YHLD) and 246–348 (PILQ…AWLT). The tract at residues 152 to 169 (KMEKKLHAVSAANTVKLR) is heparin-binding. C170 and C221 form a disulfide bridge. 5 N-linked (GlcNAc...) asparagine glycosylation sites follow: N231, N255, N287, N308, and N321. C268 and C332 are disulfide-bonded. The chain crosses the membrane as a helical span at residues 368–388 (IGIYSTGIFIIFCMVVVCVVC). Over 389 to 813 (RMRQGAKKKK…FQHVNGVVKT (425 aa)) the chain is Cytoplasmic. Position 456 is a phosphotyrosine; by autocatalysis (Y456). The Protein kinase domain occupies 471–760 (LTLGKPLGEG…LTLTTNEEYL (290 aa)). ATP is bound by residues 477 to 485 (LGEGCFGQV), K507, 555 to 557 (EYA), and N561. Y576 is subject to Phosphotyrosine; by autocatalysis. The Proton acceptor role is filled by D616. Phosphotyrosine; by autocatalysis is present on residues Y646, Y647, and Y759. Over residues 771–792 (PSFPDSSCSASSSSGDDSVFSP) the composition is skewed to low complexity. The interval 771–801 (PSFPDSSCSASSSSGDDSVFSPDPMPHDPCL) is disordered.

This sequence belongs to the protein kinase superfamily. Tyr protein kinase family. Fibroblast growth factor receptor subfamily. As to quaternary structure, monomer. Homodimer after ligand binding. Post-translationally, autophosphorylated. Binding of FGF family members together with heparan sulfate proteoglycan or heparin promotes receptor dimerization and autophosphorylation on tyrosine residues. Autophosphorylation occurs in trans between the two FGFR molecules present in the dimer. N-glycosylated in the endoplasmic reticulum. The N-glycan chains undergo further maturation to an Endo H-resistant form in the Golgi apparatus. In terms of processing, ubiquitinated. FGFR2 is rapidly ubiquitinated after autophosphorylation, leading to internalization and degradation. Subject to degradation both in lysosomes and by the proteasome. As to expression, expressed in the anterior neural plate in early neurula stage embryos. Later in development, the protein is also expressed in the eye anlagen, midbrain-hindbrain boundary and otic vesicle.

The protein localises to the cell membrane. Its subcellular location is the golgi apparatus. It localises to the cytoplasmic vesicle. The enzyme catalyses L-tyrosyl-[protein] + ATP = O-phospho-L-tyrosyl-[protein] + ADP + H(+). Present in an inactive conformation in the absence of bound ligand. Ligand binding leads to dimerization and activation by autophosphorylation on tyrosine residues. Functionally, tyrosine-protein kinase that acts as a cell-surface receptor for fibroblast growth factors and plays an essential role in the regulation of cell proliferation, differentiation, migration and apoptosis, and in the regulation of embryonic development. Required for normal embryonic patterning, limb bud development, lung morphogenesis, osteogenesis and skin development. Plays an essential role in the regulation of osteoblast differentiation, proliferation and apoptosis, and is required for normal skeleton development. Promotes cell proliferation in keratinocytes and immature osteoblasts, but promotes apoptosis in differentiated osteoblasts. Phosphorylates PLCG1, FRS2 and PAK4. Ligand binding leads to the activation of several signaling cascades. Activation of PLCG1 leads to the production of the cellular signaling molecules diacylglycerol and inositol 1,4,5-trisphosphate. Phosphorylation of FRS2 triggers recruitment of GRB2, GAB1, PIK3R1 and SOS1, and mediates activation of RAS, MAPK1/ERK2, MAPK3/ERK1 and the MAP kinase signaling pathway, as well as of the AKT1 signaling pathway. FGFR2 signaling is down-regulated by ubiquitination, internalization and degradation. Mutations that lead to constitutive kinase activation or impair normal FGFR2 maturation, internalization and degradation lead to aberrant signaling. Over-expressed FGFR2 promotes activation of STAT1. This Xenopus laevis (African clawed frog) protein is Fibroblast growth factor receptor 2 (fgfr2).